The following is a 310-amino-acid chain: Zinc-finger homeodomain protein 3 (310 aa).

A disordered region spans residues 1–64 (MEIASQEDPI…GLGKNHDHSH (64 aa)). The span at 39 to 56 (LNITTSNPLLVSSNSNGL) shows a compositional bias: polar residues. The segment at 87–136 (YKECLKNHAATMGGNAIDGCGEFMPSGEEGSIEALTCSVCNCHRNFHRRE) adopts a ZF-HD dimerization-type; degenerate zinc-finger fold. Disordered regions lie at residues 184 to 220 (TAGS…YGHN) and 281 to 310 (LSKK…STNP). A compositionally biased stretch (acidic residues) spans 190 to 199 (ESEDLMEEEG). Residues 222 to 285 (KKRFRTKFTQ…NNKQNLSKKS (64 aa)) constitute a DNA-binding region (homeobox). Positions 281–291 (LSKKSNNVSNN) are enriched in low complexity. Polar residues predominate over residues 292 to 310 (VDLSAGNNDITENLASTNP).

In terms of assembly, homo- and heterodimer with other ZFHD proteins. Interacts with MIF2 and MIF3; these interactions prevent nuclear localization and DNA-binding to inhibit transcription regulation activity. Binds to ZHD1, ZHD2 and ZHD11. Interacts with HIPP30. Interacts with KIN10, KIN11 and FLZ8. In terms of tissue distribution, mostly expressed in flowers and inflorescence.

The protein localises to the nucleus. In terms of biological role, putative transcription factor. This is Zinc-finger homeodomain protein 3 (ZHD3) from Arabidopsis thaliana (Mouse-ear cress).